Consider the following 217-residue polypeptide: Cytidylate kinase (217 aa).

Residue 11-19 participates in ATP binding; sequence GPAGAGKST.

It belongs to the cytidylate kinase family. Type 1 subfamily.

The protein resides in the cytoplasm. It catalyses the reaction CMP + ATP = CDP + ADP. The catalysed reaction is dCMP + ATP = dCDP + ADP. The sequence is that of Cytidylate kinase from Clostridium perfringens (strain SM101 / Type A).